The chain runs to 96 residues: Large ribosomal subunit protein uL23 (96 aa).

It belongs to the universal ribosomal protein uL23 family. In terms of assembly, part of the 50S ribosomal subunit. Contacts protein L29, and trigger factor when it is bound to the ribosome.

Its function is as follows. One of the early assembly proteins it binds 23S rRNA. One of the proteins that surrounds the polypeptide exit tunnel on the outside of the ribosome. Forms the main docking site for trigger factor binding to the ribosome. The sequence is that of Large ribosomal subunit protein uL23 from Solidesulfovibrio magneticus (strain ATCC 700980 / DSM 13731 / RS-1) (Desulfovibrio magneticus).